The sequence spans 1544 residues: Transcriptional activator GLI3 (1544 aa).

Polar residues-rich tracts occupy residues 1–10 (MEAQSHSSTT) and 402–429 (NPVQVSSGPSESTQHNKPTSESAVSSTG). Disordered regions lie at residues 1–83 (MEAQ…EERA) and 373–477 (SAFG…QEPE). The span at 463–476 (VKEEGDKDESKQEP) shows a compositional bias: basic and acidic residues. The C2H2-type 1 zinc-finger motif lies at 482-509 (TNCHWEGCSREFDTQEQLVHHINNDHIH). Residues 520–542 (LDCSREQKPFKAQYMLVVHMRRH) form a C2H2-type 2; degenerate zinc finger. 3 consecutive C2H2-type zinc fingers follow at residues 548–572 (HKCTFEGCTKAYSRLENLKTHLRSH), 578–603 (YVCEHEGCNKAFSNASDRAKHQNRTH), and 609–634 (YVCKIPGCTKRYTDPSSLRKHVKTVH). Disordered regions lie at residues 622 to 728 (DPSS…YSNN), 865 to 919 (RSSG…DLPS), 1126 to 1155 (SVVLGNNNPSSFDRAPPASSQPAGSEVSKS), and 1327 to 1368 (HYQG…GNQS). Residues 634–650 (HGPEAHVTKKQRGDIHP) show a composition bias toward basic and acidic residues. Residues 660-685 (SHSQTRSPGQQTQGATGEQKDLNSTT) show a composition bias toward polar residues. Positions 686–701 (SRREECLQVKAVKSEK) are enriched in basic and acidic residues. The segment covering 702–728 (PMTSQPSPGGQSTCSSEQSPISNYSNN) has biased composition (polar residues). Low complexity predominate over residues 865–882 (RSSGISPCFSSRRSSDAS). The segment covering 1330 to 1355 (GVNQSSPMTLGQVSPTSQSSLHQGPQ) has biased composition (polar residues).

It belongs to the GLI C2H2-type zinc-finger protein family. In terms of processing, phosphorylation is essential for its proteolytic processing. Post-translationally, the repressor form (GLI3R), a C-terminally truncated form is generated from the full-length GLI3 protein (GLI3FL) through proteolytic processing.

The protein localises to the nucleus. It localises to the cytoplasm. Functionally, has a dual function as a transcriptional activator and a repressor of the sonic hedgehog (Shh) pathway, and plays a role in limb development. The full-length GLI3 form (GLI3FL) acts as an activator (GLI3A) while GLI3R, its C-terminally truncated form, acts as a repressor. The polypeptide is Transcriptional activator GLI3 (GLI3) (Gallus gallus (Chicken)).